The chain runs to 1068 residues: Carbamoyl phosphate synthase large chain (1068 aa).

The tract at residues 1–401 is carboxyphosphate synthetic domain; sequence MPRRTDLHRI…SLLKAVRSLE (401 aa). Residues R129, R169, G175, G176, Q208, I210, E215, G241, V242, H243, Q284, and E298 each coordinate ATP. The region spanning 133–327 is the ATP-grasp 1 domain; sequence KQLMDELGQP…IAKIAAKIAV (195 aa). The Mg(2+) site is built by Q284, E298, and N300. Positions 284, 298, and 300 each coordinate Mn(2+). An oligomerization domain region spans residues 402 to 546; sequence IGVDHLALRE…YSTYEMENES (145 aa). The tract at residues 547–935 is carbamoyl phosphate synthetic domain; it reads KKSQRPSVLV…ALYKVFEAAN (389 aa). Residues 671-867 enclose the ATP-grasp 2 domain; sequence ESLLAELGIP…MAEVATRIIL (197 aa). Positions 707, 746, 748, 752, 777, 778, 779, 780, 820, and 838 each coordinate ATP. 3 residues coordinate Mg(2+): Q820, E838, and N840. Mn(2+) is bound by residues Q820, E838, and N840. The MGS-like domain occupies 936–1068; that stretch reads LHVPEYGKIL…ESRVFSTESI (133 aa). The interval 936–1068 is allosteric domain; it reads LHVPEYGKIL…ESRVFSTESI (133 aa).

It belongs to the CarB family. In terms of assembly, composed of two chains; the small (or glutamine) chain promotes the hydrolysis of glutamine to ammonia, which is used by the large (or ammonia) chain to synthesize carbamoyl phosphate. Tetramer of heterodimers (alpha,beta)4. Requires Mg(2+) as cofactor. Mn(2+) is required as a cofactor.

The enzyme catalyses hydrogencarbonate + L-glutamine + 2 ATP + H2O = carbamoyl phosphate + L-glutamate + 2 ADP + phosphate + 2 H(+). It catalyses the reaction hydrogencarbonate + NH4(+) + 2 ATP = carbamoyl phosphate + 2 ADP + phosphate + 2 H(+). The protein operates within amino-acid biosynthesis; L-arginine biosynthesis; carbamoyl phosphate from bicarbonate: step 1/1. It functions in the pathway pyrimidine metabolism; UMP biosynthesis via de novo pathway; (S)-dihydroorotate from bicarbonate: step 1/3. Large subunit of the glutamine-dependent carbamoyl phosphate synthetase (CPSase). CPSase catalyzes the formation of carbamoyl phosphate from the ammonia moiety of glutamine, carbonate, and phosphate donated by ATP, constituting the first step of 2 biosynthetic pathways, one leading to arginine and/or urea and the other to pyrimidine nucleotides. The large subunit (synthetase) binds the substrates ammonia (free or transferred from glutamine from the small subunit), hydrogencarbonate and ATP and carries out an ATP-coupled ligase reaction, activating hydrogencarbonate by forming carboxy phosphate which reacts with ammonia to form carbamoyl phosphate. This is Carbamoyl phosphate synthase large chain from Cutibacterium acnes (strain DSM 16379 / KPA171202) (Propionibacterium acnes).